A 355-amino-acid polypeptide reads, in one-letter code: Phospho-N-acetylmuramoyl-pentapeptide-transferase (355 aa).

A run of 10 helical transmembrane segments spans residues 3 to 23 (GVLIAAMVALVVSLLGTPWVI), 56 to 76 (VIIVATLVGYFLAHLVTGIGF), 80 to 100 (GLLVLLVMTGLGIVGFLDDYI), 120 to 140 (AAVALAFGLLAVRFKNHAGLL), 152 to 172 (TSLTVGIIGFPLLAWIIIAAT), 185 to 205 (LAAGTSAMVFGAYVVISFWQF), 224 to 244 (PLDVALVAAAAMGACFGFLWW), 251 to 271 (IFMGDTGSLALGGAFASIAIV), 276 to 296 (LLLVVLGGLFVIETLSVMIQV), and 330 to 350 (FWIVSGLAVAFGLGLFYAEFL).

Belongs to the glycosyltransferase 4 family. MraY subfamily. Mg(2+) serves as cofactor.

The protein localises to the cell membrane. It carries out the reaction UDP-N-acetyl-alpha-D-muramoyl-L-alanyl-gamma-D-glutamyl-meso-2,6-diaminopimeloyl-D-alanyl-D-alanine + di-trans,octa-cis-undecaprenyl phosphate = di-trans,octa-cis-undecaprenyl diphospho-N-acetyl-alpha-D-muramoyl-L-alanyl-D-glutamyl-meso-2,6-diaminopimeloyl-D-alanyl-D-alanine + UMP. It functions in the pathway cell wall biogenesis; peptidoglycan biosynthesis. In terms of biological role, catalyzes the initial step of the lipid cycle reactions in the biosynthesis of the cell wall peptidoglycan: transfers peptidoglycan precursor phospho-MurNAc-pentapeptide from UDP-MurNAc-pentapeptide onto the lipid carrier undecaprenyl phosphate, yielding undecaprenyl-pyrophosphoryl-MurNAc-pentapeptide, known as lipid I. This Frankia alni (strain DSM 45986 / CECT 9034 / ACN14a) protein is Phospho-N-acetylmuramoyl-pentapeptide-transferase.